The primary structure comprises 666 residues: Heparin-sulfate lyase (666 aa).

The signal sequence occupies residues 1–22 (MNKTFKYIVLLALACFVGKANA). Residue Tyr-301 is the Proton acceptor of the active site.

Belongs to the polysaccharide lyase 12 family.

Its subcellular location is the periplasm. It carries out the reaction Elimination of sulfate, appears to act on linkages between N-acetyl-D-glucosamine and uronate. Product is an unsaturated sugar.. Specifically cleaves heparan sulfate-rich regions of acidic polysaccharides. Also able to degrade heparin and hyaluronic acid. Does not act on N,O-desulfated glucosamine or N-acetyl-O-sulfated glucosamine linkages. Functions in cleaving metazoan heparan sulfate and providing carbon, nitrogen and sulfate sources for microorganisms. In Bacteroides stercoris, this protein is Heparin-sulfate lyase (hepC).